The sequence spans 319 residues: Succinoglycan biosynthesis protein ExoW (319 aa).

It belongs to the glycosyltransferase 2 family.

The protein resides in the cell membrane. Its pathway is glycan metabolism; exopolysaccharide biosynthesis. Functionally, glycosyltransferase required for the synthesis of succinoglycan (EPS I). Needed for the addition of the seventh sugar (glucose), catalyzes the formation of a beta-1,3 linkage between the seventh and eighth sugar. This Rhizobium meliloti (strain 1021) (Ensifer meliloti) protein is Succinoglycan biosynthesis protein ExoW (exoW).